A 188-amino-acid chain; its full sequence is Meiotically up-regulated gene 94 protein (188 aa).

The protein localises to the cytoplasm. Its subcellular location is the nucleus. Its function is as follows. Has a role in meiosis. In Schizosaccharomyces pombe (strain 972 / ATCC 24843) (Fission yeast), this protein is Meiotically up-regulated gene 94 protein (mug94).